The following is a 164-amino-acid chain: Lipoprotein signal peptidase (164 aa).

A run of 4 helical transmembrane segments spans residues 11–31 (YWVL…AVLS), 41–61 (VIPS…FSFL), 64–84 (QGGW…AYLV), and 92–112 (FAAL…GNVI). Catalysis depends on residues D122 and D140. Residues 132–152 (FYPAFNIADSFICVGAVLAVL) form a helical membrane-spanning segment.

The protein belongs to the peptidase A8 family.

The protein resides in the cell inner membrane. It carries out the reaction Release of signal peptides from bacterial membrane prolipoproteins. Hydrolyzes -Xaa-Yaa-Zaa-|-(S,diacylglyceryl)Cys-, in which Xaa is hydrophobic (preferably Leu), and Yaa (Ala or Ser) and Zaa (Gly or Ala) have small, neutral side chains.. The protein operates within protein modification; lipoprotein biosynthesis (signal peptide cleavage). This protein specifically catalyzes the removal of signal peptides from prolipoproteins. The chain is Lipoprotein signal peptidase from Neisseria gonorrhoeae (strain ATCC 700825 / FA 1090).